A 634-amino-acid chain; its full sequence is MQTITRTSRNSLASLTLGAIGVVYGDIGTSPLYAFREALGQAARDGIVQAEIVGVLSLALWALIIVVTLKYVIFLSRMDNNGEGGVLSLMALAQRATGGGWVAVTLLGATGAALFYGDAIITPALSVLSAAEGLKTIPGLDGMSQTAIIGVTVGILAALFMFQSRGTASVATLFGPVCLVWFVALAGLGLWHIADAPEVLTAFNPLHAVTFLVSHGVTGLFVLGAVFLTVTGAEALIADMGHFGRRPIQLGWLSFVWPALTLNYLGQGALALKALAAAEAIGQPLANADWFFIMAPDVLRAPLVILATLATIIASQAVITGAYSLTHQAISLGLLPRLTIRQTSEHQMGQIYMPGVNWLLLGGVLLLVLGFKSSSAMAAAYGIAVTGTMVVTTCMAFLIAWKYWNWEPVWTALLIAPFLALDLFFFGANILRVSEGGWVPLLVAGLVGLVIFTWLKGRRTALARASEQGVSLNETVMALHARPPTRIEGTAVFLTQDLDVTPSALLHNLKHNKALHRNNIVLKVEIQARPYVAPEQRVVVDRIDESFLKARLRYGYMDTIDVPSDLARADGLLVGPGGTSFFVGRSAIRFAARPVLPRWMTVVYMFLHRNAADPTAYFSIPSNRVVELGSQIEL.

The next 12 membrane-spanning stretches (helical) occupy residues 15–35 (LTLGAIGVVYGDIGTSPLYAF), 55–75 (VLSLALWALIIVVTLKYVIFL), 101–121 (WVAVTLLGATGAALFYGDAII), 142–162 (GMSQTAIIGVTVGILAALFMF), 173–193 (LFGPVCLVWFVALAGLGLWHI), 208–228 (AVTFLVSHGVTGLFVLGAVFL), 252–272 (WLSFVWPALTLNYLGQGALAL), 303–323 (LVILATLATIIASQAVITGAY), 351–371 (IYMPGVNWLLLGGVLLLVLGF), 381–401 (YGIAVTGTMVVTTCMAFLIAW), 408–428 (PVWTALLIAPFLALDLFFFGA), and 435–455 (EGGWVPLLVAGLVGLVIFTWL).

The protein belongs to the HAK/KUP transporter (TC 2.A.72) family.

The protein resides in the cell inner membrane. The enzyme catalyses K(+)(in) + H(+)(in) = K(+)(out) + H(+)(out). Transport of potassium into the cell. Likely operates as a K(+):H(+) symporter. This is Probable potassium transport system protein Kup 2 from Novosphingobium aromaticivorans (strain ATCC 700278 / DSM 12444 / CCUG 56034 / CIP 105152 / NBRC 16084 / F199).